Consider the following 466-residue polypeptide: Asparagine--tRNA ligase (466 aa).

This sequence belongs to the class-II aminoacyl-tRNA synthetase family. As to quaternary structure, homodimer.

It localises to the cytoplasm. The catalysed reaction is tRNA(Asn) + L-asparagine + ATP = L-asparaginyl-tRNA(Asn) + AMP + diphosphate + H(+). This chain is Asparagine--tRNA ligase, found in Shewanella amazonensis (strain ATCC BAA-1098 / SB2B).